Consider the following 95-residue polypeptide: Co-chaperonin GroES (95 aa).

The protein belongs to the GroES chaperonin family. Heptamer of 7 subunits arranged in a ring. Interacts with the chaperonin GroEL.

It localises to the cytoplasm. Functionally, together with the chaperonin GroEL, plays an essential role in assisting protein folding. The GroEL-GroES system forms a nano-cage that allows encapsulation of the non-native substrate proteins and provides a physical environment optimized to promote and accelerate protein folding. GroES binds to the apical surface of the GroEL ring, thereby capping the opening of the GroEL channel. The polypeptide is Co-chaperonin GroES (Oleidesulfovibrio alaskensis (strain ATCC BAA-1058 / DSM 17464 / G20) (Desulfovibrio alaskensis)).